The chain runs to 145 residues: Small ribosomal subunit protein eS19 (145 aa).

Lys-23 bears the N6-acetyllysine mark. Arg-67 is subject to Omega-N-methylarginine. N6-acetyllysine occurs at positions 111 and 115. Lys-143 is subject to N6-succinyllysine.

Belongs to the eukaryotic ribosomal protein eS19 family. Component of the small ribosomal subunit. Part of the small subunit (SSU) processome, composed of more than 70 proteins and the RNA chaperone small nucleolar RNA (snoRNA) U3. Interacts with RPS19BP1; the interaction is direct and mediates the integration of RPS19 in state post-A1. Interacts with RPS19BP1.

Its subcellular location is the cytoplasm. It localises to the nucleus. It is found in the nucleolus. In terms of biological role, component of the small ribosomal subunit. The ribosome is a large ribonucleoprotein complex responsible for the synthesis of proteins in the cell. Required for pre-rRNA processing and maturation of 40S ribosomal subunits. Part of the small subunit (SSU) processome, first precursor of the small eukaryotic ribosomal subunit. During the assembly of the SSU processome in the nucleolus, many ribosome biogenesis factors, an RNA chaperone and ribosomal proteins associate with the nascent pre-rRNA and work in concert to generate RNA folding, modifications, rearrangements and cleavage as well as targeted degradation of pre-ribosomal RNA by the RNA exosome. This Oryctolagus cuniculus (Rabbit) protein is Small ribosomal subunit protein eS19 (RPS19).